Here is a 287-residue protein sequence, read N- to C-terminus: D-apionate oxidoisomerase (287 aa).

NAD(+) is bound by residues Gly13–Met15, Glu36, and Asp71. 2 residues coordinate Zn(2+): His116 and Glu186.

It belongs to the ApnO family. Zn(2+) is required as a cofactor.

It catalyses the reaction D-apionate + NAD(+) = 3-oxoisoapionate + NADH + H(+). Its pathway is carbohydrate metabolism. Involved in catabolism of D-apiose. Catalyzes the conversion of D-apionate to 3-oxo-isoapionate. The polypeptide is D-apionate oxidoisomerase (Blautia hydrogenotrophica (strain DSM 10507 / JCM 14656 / S5a33) (Ruminococcus hydrogenotrophicus)).